A 323-amino-acid chain; its full sequence is Magnesium transporter NIPA1 (323 aa).

Residues methionine 1–alanine 21 lie on the Extracellular side of the membrane. The helical transmembrane segment at valine 22–leucine 42 threads the bilayer. At glutamine 43 to aspartate 60 the chain is on the cytoplasmic side. A helical membrane pass occupies residues isoleucine 61–tyrosine 81. A topological domain (extracellular) is located at residue threonine 82. A helical membrane pass occupies residues alanine 83–leucine 103. The Cytoplasmic portion of the chain corresponds to alanine 104–lysine 111. Residues leucine 112 to isoleucine 132 form a helical membrane-spanning segment. Over histidine 133–proline 153 the chain is Extracellular. A helical transmembrane segment spans residues valine 154–alanine 174. The Cytoplasmic portion of the chain corresponds to proline 175–histidine 177. A helical membrane pass occupies residues glycine 178 to proline 198. Residues serine 199–glutamine 218 are Extracellular-facing. Residues arginine 219–phenylalanine 239 form a helical membrane-spanning segment. The Cytoplasmic segment spans residues arginine 240–valine 253. The chain crosses the membrane as a helical span at residues phenylalanine 254–phenylalanine 274. Residues arginine 275–aspartate 284 lie on the Extracellular side of the membrane. A helical membrane pass occupies residues phenylalanine 285–phenylalanine 305. Over lysine 306–aspartate 323 the chain is Cytoplasmic.

It belongs to the NIPA family. Homodimer. As to expression, widely expressed. Predominantly expressed in neuronal tissues. Brain, heart, kidney, liver and colon (at protein level).

Its subcellular location is the cell membrane. The protein resides in the early endosome. It catalyses the reaction Mg(2+)(in) = Mg(2+)(out). Functionally, acts as a Mg(2+) transporter. Can also transport other divalent cations such as Fe(2+), Sr(2+), Ba(2+), Zn(2+) and Co(2+) but to a much less extent than Mg(2+). The sequence is that of Magnesium transporter NIPA1 (Nipa1) from Mus musculus (Mouse).